We begin with the raw amino-acid sequence, 92 residues long: DNA/RNA-binding protein Alba (92 aa).

K11 carries the N6-acetyllysine modification.

It belongs to the histone-like Alba family. In terms of processing, acetylated. Acetylation at Lys-11 decreases DNA-binding affinity.

It is found in the cytoplasm. Its subcellular location is the chromosome. In terms of biological role, binds double-stranded DNA tightly but without sequence specificity. Involved in DNA compaction. This chain is DNA/RNA-binding protein Alba, found in Pyrobaculum calidifontis (strain DSM 21063 / JCM 11548 / VA1).